A 360-amino-acid polypeptide reads, in one-letter code: Histidinol-phosphate aminotransferase (360 aa).

Position 211 is an N6-(pyridoxal phosphate)lysine (Lys-211).

This sequence belongs to the class-II pyridoxal-phosphate-dependent aminotransferase family. Histidinol-phosphate aminotransferase subfamily. As to quaternary structure, homodimer. Pyridoxal 5'-phosphate serves as cofactor.

The catalysed reaction is L-histidinol phosphate + 2-oxoglutarate = 3-(imidazol-4-yl)-2-oxopropyl phosphate + L-glutamate. The protein operates within amino-acid biosynthesis; L-histidine biosynthesis; L-histidine from 5-phospho-alpha-D-ribose 1-diphosphate: step 7/9. The chain is Histidinol-phosphate aminotransferase from Sodalis glossinidius (strain morsitans).